Consider the following 463-residue polypeptide: Ribulose bisphosphate carboxylase (463 aa).

Asn116 provides a ligand contact to substrate. The Proton acceptor role is filled by Lys171. A substrate-binding site is contributed by Lys173. Mg(2+) is bound by residues Lys196, Asp198, and Glu199. Lys196 is subject to N6-carboxylysine. Residue His294 is the Proton acceptor of the active site. The substrate site is built by Arg295, His328, and Ser375.

It belongs to the RuBisCO large chain family. Type II subfamily. As to quaternary structure, homodimer. Mg(2+) is required as a cofactor.

The enzyme catalyses 2 (2R)-3-phosphoglycerate + 2 H(+) = D-ribulose 1,5-bisphosphate + CO2 + H2O. The catalysed reaction is D-ribulose 1,5-bisphosphate + O2 = 2-phosphoglycolate + (2R)-3-phosphoglycerate + 2 H(+). RuBisCO catalyzes two reactions: the carboxylation of D-ribulose 1,5-bisphosphate, the primary event in carbon dioxide fixation, as well as the oxidative fragmentation of the pentose substrate. Both reactions occur simultaneously and in competition at the same active site. This is Ribulose bisphosphate carboxylase from Hydrogenovibrio marinus.